Here is a 397-residue protein sequence, read N- to C-terminus: ORC1-type DNA replication protein 1 (397 aa).

ATP contacts are provided by residues 67 to 71 (TGKTA), tyrosine 208, and arginine 220.

The protein belongs to the CDC6/cdc18 family.

Functionally, involved in regulation of DNA replication. In Sulfolobus acidocaldarius (strain ATCC 33909 / DSM 639 / JCM 8929 / NBRC 15157 / NCIMB 11770), this protein is ORC1-type DNA replication protein 1 (cdc6-1).